Reading from the N-terminus, the 713-residue chain is UvrABC system protein B (713 aa).

The 387-residue stretch at 35–421 folds into the Helicase ATP-binding domain; that stretch reads RRIRAGEKDV…GDGFVEQIIR (387 aa). 48–55 contacts ATP; it reads GATGTGKS. Positions 101 to 124 match the Beta-hairpin motif; that stretch reads YYDYYQPEAYVPQSDTYIEKDSSI. In terms of domain architecture, Helicase C-terminal spans 438 to 604; the sequence is QIDDLVHEIR…PLRKKINDIV (167 aa). Residues 624 to 663 are disordered; sequence QAKDGKGAKAPVPSLGGKAAAKGAKSAKGKAKETVPTDRP. The span at 639-649 shows a compositional bias: low complexity; it reads GGKAAAKGAKS. Positions 653–663 are enriched in basic and acidic residues; that stretch reads KAKETVPTDRP. The UVR domain maps to 668 to 703; that stretch reads AEEIEELTNRMRAAAADLQFEIAARLRDEVSEMKKE.

The protein belongs to the UvrB family. In terms of assembly, forms a heterotetramer with UvrA during the search for lesions. Interacts with UvrC in an incision complex.

Its subcellular location is the cytoplasm. Its function is as follows. The UvrABC repair system catalyzes the recognition and processing of DNA lesions. A damage recognition complex composed of 2 UvrA and 2 UvrB subunits scans DNA for abnormalities. Upon binding of the UvrA(2)B(2) complex to a putative damaged site, the DNA wraps around one UvrB monomer. DNA wrap is dependent on ATP binding by UvrB and probably causes local melting of the DNA helix, facilitating insertion of UvrB beta-hairpin between the DNA strands. Then UvrB probes one DNA strand for the presence of a lesion. If a lesion is found the UvrA subunits dissociate and the UvrB-DNA preincision complex is formed. This complex is subsequently bound by UvrC and the second UvrB is released. If no lesion is found, the DNA wraps around the other UvrB subunit that will check the other stand for damage. The polypeptide is UvrABC system protein B (Streptomyces avermitilis (strain ATCC 31267 / DSM 46492 / JCM 5070 / NBRC 14893 / NCIMB 12804 / NRRL 8165 / MA-4680)).